Consider the following 185-residue polypeptide: ATP synthase subunit delta, chloroplastic (185 aa).

The protein belongs to the ATPase delta chain family. F-type ATPases have 2 components, F(1) - the catalytic core - and F(0) - the membrane proton channel. F(1) has five subunits: alpha(3), beta(3), gamma(1), delta(1), epsilon(1). CF(0) has four main subunits: a(1), b(1), b'(1) and c(10-14). The alpha and beta chains form an alternating ring which encloses part of the gamma chain. F(1) is attached to F(0) by a central stalk formed by the gamma and epsilon chains, while a peripheral stalk is formed by the delta, b and b' chains.

It is found in the plastid. The protein resides in the chloroplast thylakoid membrane. In terms of biological role, f(1)F(0) ATP synthase produces ATP from ADP in the presence of a proton or sodium gradient. F-type ATPases consist of two structural domains, F(1) containing the extramembraneous catalytic core and F(0) containing the membrane proton channel, linked together by a central stalk and a peripheral stalk. During catalysis, ATP synthesis in the catalytic domain of F(1) is coupled via a rotary mechanism of the central stalk subunits to proton translocation. This protein is part of the stalk that links CF(0) to CF(1). It either transmits conformational changes from CF(0) to CF(1) or is implicated in proton conduction. In Gracilaria tenuistipitata var. liui (Red alga), this protein is ATP synthase subunit delta, chloroplastic.